The chain runs to 375 residues: DNA replication and repair protein RecF (375 aa).

30–37 (GDNAQGKT) is a binding site for ATP.

The protein belongs to the RecF family.

It is found in the cytoplasm. In terms of biological role, the RecF protein is involved in DNA metabolism; it is required for DNA replication and normal SOS inducibility. RecF binds preferentially to single-stranded, linear DNA. It also seems to bind ATP. This Symbiobacterium thermophilum (strain DSM 24528 / JCM 14929 / IAM 14863 / T) protein is DNA replication and repair protein RecF.